The sequence spans 446 residues: MSRYFGTDGIRGRVGQGLISADFVLRLGNALGRVLAQGRDTRPMVLIGKDTRISGYMFESALEAGLVAAGADVQLIGPMPTPAIAFLTNTLRADAGVVISASHNPHDDNGIKFFSAMGEKLDDATEAAIEAAIEAPFLTVDSEYLGKVKRTRDAIGRYIEFSKASVSRGFTLRGLKLVLDCAHGATYHIAPMLFRELGAELVAIGVDPDGLNINAGVGSTHLETLAATVRESGADLGIAFDGDGDRVLMTDAQGRTVDGDDLLYVLARAWRASGRLKGTVVGTLMSNYGLEQALGTLGIPFIRAKVGDRYVHQALVESGGVLGGEASGHLLCLDRATTGDGIVSALQVLEVLRHEGLTLSQALLGLHKVPQKTVNVCWSGPARAAVEMPEVRQALVEAQAAVQGRGRVFLRPSGTEPVVRITVEADDVVLMQQTLDRLADVVRDAA.

The active-site Phosphoserine intermediate is the Ser-102. Residues Ser-102, Asp-241, Asp-243, and Asp-245 each contribute to the Mg(2+) site. Position 102 is a phosphoserine (Ser-102).

Belongs to the phosphohexose mutase family. Mg(2+) is required as a cofactor. Activated by phosphorylation.

It catalyses the reaction alpha-D-glucosamine 1-phosphate = D-glucosamine 6-phosphate. In terms of biological role, catalyzes the conversion of glucosamine-6-phosphate to glucosamine-1-phosphate. This Xylella fastidiosa (strain M12) protein is Phosphoglucosamine mutase.